We begin with the raw amino-acid sequence, 462 residues long: Argininosuccinate lyase (462 aa).

This sequence belongs to the lyase 1 family. Argininosuccinate lyase subfamily.

The protein localises to the cytoplasm. The catalysed reaction is 2-(N(omega)-L-arginino)succinate = fumarate + L-arginine. It functions in the pathway amino-acid biosynthesis; L-arginine biosynthesis; L-arginine from L-ornithine and carbamoyl phosphate: step 3/3. This Rippkaea orientalis (strain PCC 8801 / RF-1) (Cyanothece sp. (strain PCC 8801)) protein is Argininosuccinate lyase.